Reading from the N-terminus, the 459-residue chain is DnaJ protein homolog XDJ1 (459 aa).

The region spanning 7–79 (GDRLYDVLGV…KSHYDLYGDD (73 aa)) is the J domain. Residues 146–240 (GKKLKFDLKR…CAGLGLLSKK (95 aa)) form a CR-type zinc finger. CXXCXGXG motif repeat units follow at residues 159–166 (CIKCHGSG), 181–188 (CESCAGKG), 208–215 (CEKCNGKG), and 228–235 (CPDCAGLG).

Its subcellular location is the mitochondrion outer membrane. In Saccharomyces cerevisiae (strain ATCC 204508 / S288c) (Baker's yeast), this protein is DnaJ protein homolog XDJ1 (XDJ1).